Here is an 840-residue protein sequence, read N- to C-terminus: MPSSKPLAEYARKRDFRQTPEPSGRKPRKDSTGLLRYCVQKHDASRLHYDFRLELDGTLKSWAVPKGPCLDPAVKRLAVQVEDHPLDYADFEGSIPQGHYGAGDVIVWDRGAWTPLDDPREGLEKGHLSFALDGEKLSGRWHLIRTNLRGKQSQWFLVKAKDGEARSLDRFDVLKERPDSVLSERTLLPRHGEAATPAARPARRGKSGGKTPMPEWIAPELASLVEQPPRGEWAYELKLDGYRLMSRIEDGHVRLLTRNGHDWTERLPHLEKALAGLGLQRSWLDGELVVLDEEGRPDFQALQNAFEEGRGENILYVLFDLPYHEGEDLRDVALEERRARLEALLEGRDEDPLRFSATLAEDPRDLLASACKLGLEGVIGKRLGSAYRSRRSNDWIKLKCQLRQEFVIVGYTEPKGSRRHIGALLLGLYSPDEERRLRYAGKVGSGFTAASLKKVRERLEPLAVRSSPLAKVPPARETGSVQWVRPQQLCEVSYAQMTRGGIIRQAVFHGLREDKPAREVTGERPAGPPPLRGARKASAGASRAATAGVRISHPQRLIDPSIQASKLELAEFHARYADLLLRDLRERPVSLVRGPDGIGGELFFQKHAARLKIPGIVQLDPALDPGHPPLLQIRSAEALVGAVQMGSIEFHTWNASLANLERPDRFVLDLDPDPALPWKRMLEATQLSLTLLDELGLRAFLKTSGGKGMHLLVPLERRHGWDEVKDFAQAISQHLARLMPERFSAVSGPRNRVGKIFVDYLRNSRGASTVAAYSVRAREGLPVSVPVFREELDSLQGANQWNLRSLPQRLDELAGDDPWADYAGTRQRISAAMRRQLGRG.

The interval Met1 to Thr32 is disordered. The segment at Leu7 to Asp162 is 3'-phosphoesterase domain (PE). 3 residues coordinate Mn(2+): His42, His48, and Asp50. The interval Pro189–Thr211 is disordered. The interval Pro219–Thr521 is ligase domain (Lig). The N6-AMP-lysine intermediate role is filled by Lys238. Mn(2+)-binding residues include Asp240 and Glu376. The segment at Asp514 to Thr546 is disordered. Low complexity predominate over residues Lys536–Thr546. Positions Val549 to Asp793 are DNA repair polymerase domain (Pol). ATP is bound by residues Phe604 and His651. Residues Asp669 and Asp671 each contribute to the Mn(2+) site. ATP-binding positions include Asp671 and Ser704 to His710. Asp759 is a binding site for Mn(2+). ATP contacts are provided by residues Ser768 and Arg776 to Arg778.

In the N-terminal section; belongs to the LigD 3'-phosphoesterase family. It in the central section; belongs to the ATP-dependent DNA ligase family. The protein in the C-terminal section; belongs to the LigD polymerase family. Monomer. Interacts with Ku. Requires Mn(2+) as cofactor.

The enzyme catalyses ATP + (deoxyribonucleotide)n-3'-hydroxyl + 5'-phospho-(deoxyribonucleotide)m = (deoxyribonucleotide)n+m + AMP + diphosphate.. With respect to regulation, rNTP addition and end joining activities are stimulated by Ku homodimer. Its function is as follows. With Ku probably forms a non-homologous end joining (NHEJ) repair enzyme, which repairs dsDNA breaks (DSB) with reduced fidelity. Acts as a DNA ligase on singly nicked dsDNA, fills dsDNA gaps (3- or 4- nucleotide gaps, prefers a 5'-phosphate at the gap distal end, prefers dNTPs over rNTPs), has DNA-directed DNA polymerase activity (templated primer extension) and DNA-directed RNA polymerase activity, adds 1 or 2 non-templated rNTP (or less well dNTP) to ssDNA or blunt-end dsDNA (primer extension). Has 3' resection activity, removing 3'-rNMPs from DNA using its 3'-ribonuclease and 3'-phosphatase activities sequentially. Resection requires a 2'-OH in the penultimate nucleoside position (i.e. a ribo- not deoxyribonucleoside), although the 3'-phosphatase activity does not, and its specific activity is 16-fold higher on a DNA substrate. On appropriate substrates will extend a DNA primer to the end of the template strand and then incorporate a non-templated nucleotide. In terms of biological role, the preference of the polymerase domain for rNTPs over dNTPs may be advantageous in quiescent cells where the dNTP pool may be limiting. In Pseudomonas aeruginosa (strain ATCC 15692 / DSM 22644 / CIP 104116 / JCM 14847 / LMG 12228 / 1C / PRS 101 / PAO1), this protein is Multifunctional non-homologous end joining protein LigD (ligD).